Consider the following 303-residue polypeptide: MIKQRTIAQVVKAIGIGLHKGEKVTITLRPASANTGIVFRRVDLDPVVDFETTPEAVGDTQLCTCLINKDGVRLSTTEHLIAAVAAMGIDNLIVELDSSEVPIMDGSALPFIYLLQKGGIEEQNAAKRFIRIKEKVRIEEGDKWAELEPYDGFHIDFEIAFDHPAINESRQRIGLDITTKSFIEEISRARTFGFMKDIEYMHANNLALGGSMDSAVVLDEFKVLNPNGLRYSDEFVKHKILDCVGDMFMTGHNILGKVTAFKSGHDLNNKLLRKLMATESAWEWATFETPVTMPAPGLELAPA.

His-79, His-238, and Asp-242 together coordinate Zn(2+). The active-site Proton donor is His-265.

This sequence belongs to the LpxC family. It depends on Zn(2+) as a cofactor.

It carries out the reaction a UDP-3-O-[(3R)-3-hydroxyacyl]-N-acetyl-alpha-D-glucosamine + H2O = a UDP-3-O-[(3R)-3-hydroxyacyl]-alpha-D-glucosamine + acetate. The protein operates within glycolipid biosynthesis; lipid IV(A) biosynthesis; lipid IV(A) from (3R)-3-hydroxytetradecanoyl-[acyl-carrier-protein] and UDP-N-acetyl-alpha-D-glucosamine: step 2/6. Functionally, catalyzes the hydrolysis of UDP-3-O-myristoyl-N-acetylglucosamine to form UDP-3-O-myristoylglucosamine and acetate, the committed step in lipid A biosynthesis. This chain is UDP-3-O-acyl-N-acetylglucosamine deacetylase, found in Pseudoalteromonas translucida (strain TAC 125).